We begin with the raw amino-acid sequence, 483 residues long: 1-aminocyclopropane-1-carboxylate synthase 2 (483 aa).

At Lys275 the chain carries N6-(pyridoxal phosphate)lysine.

This sequence belongs to the class-I pyridoxal-phosphate-dependent aminotransferase family. It depends on pyridoxal 5'-phosphate as a cofactor.

The catalysed reaction is S-adenosyl-L-methionine = 1-aminocyclopropane-1-carboxylate + S-methyl-5'-thioadenosine + H(+). Its pathway is alkene biosynthesis; ethylene biosynthesis via S-adenosyl-L-methionine; ethylene from S-adenosyl-L-methionine: step 1/2. In terms of biological role, catalyzes the formation of 1-aminocyclopropane-1-carboxylate, a direct precursor of ethylene in higher plants. Involved in defense response by producing ethylene after pathogen infection. Involved in several phosphate deficiency-induced adaptive responses, such as lateral root elongation. The polypeptide is 1-aminocyclopropane-1-carboxylate synthase 2 (Oryza sativa subsp. japonica (Rice)).